The primary structure comprises 91 residues: uncharacterized protein (91 aa).

This is an uncharacterized protein from Acidianus convivator (ABV).